Consider the following 369-residue polypeptide: H-2 class I histocompatibility antigen, K-K alpha chain (369 aa).

An N-terminal signal peptide occupies residues 1–21; that stretch reads MAPCMLLLLLAAALAPTQTRA. The alpha-1 stretch occupies residues 22 to 111; that stretch reads GPHSLRYFHT…ALRYYNQSAG (90 aa). The Extracellular portion of the chain corresponds to 22-305; that stretch reads GPHSLRYFHT…EPPPSTVSNT (284 aa). Asn107 carries an N-linked (GlcNAc...) asparagine glycan. The alpha-2 stretch occupies residues 112–203; that stretch reads GSHTFQRMYG…QLGNATLPRT (92 aa). An intrachain disulfide couples Cys122 to Cys185. N-linked (GlcNAc...) asparagine glycosylation occurs at Asn197. The segment at 204-295 is alpha-3; that stretch reads DSPKAHVTRH…GLPEPLTLRW (92 aa). Residues 206–294 enclose the Ig-like C1-type domain; it reads PKAHVTRHSR…QGLPEPLTLR (89 aa). The cysteines at positions 224 and 280 are disulfide-linked. A connecting peptide region spans residues 296-305; sequence EPPPSTVSNT. Residues 306–328 form a helical membrane-spanning segment; that stretch reads VIIAVLVVLGAAIVTGAVVAFVM. At 329-369 the chain is on the cytoplasmic side; it reads KMRRRNTGGKGGDYALAPGSQTSDLSLPDCKVMVHDPHSLA. Ser351 and Ser354 each carry phosphoserine.

This sequence belongs to the MHC class I family. Heterodimer of an alpha chain and a beta chain (beta-2-microglobulin).

It is found in the membrane. Its function is as follows. Involved in the presentation of foreign antigens to the immune system. The sequence is that of H-2 class I histocompatibility antigen, K-K alpha chain (H2-K1) from Mus musculus (Mouse).